The chain runs to 634 residues: Leucine--tRNA ligase subunit alpha (634 aa).

Positions 43-51 (PSGRIHMGH) match the 'HIGH' region motif.

Belongs to the class-I aminoacyl-tRNA synthetase family. As to quaternary structure, seems to consist of an alpha chain and a beta chain.

It localises to the cytoplasm. It catalyses the reaction tRNA(Leu) + L-leucine + ATP = L-leucyl-tRNA(Leu) + AMP + diphosphate. The sequence is that of Leucine--tRNA ligase subunit alpha (leuS) from Aquifex aeolicus (strain VF5).